Here is a 318-residue protein sequence, read N- to C-terminus: Serpentine receptor class delta-25 (318 aa).

A run of 7 helical transmembrane segments spans residues 5 to 25 (LLHS…MYLA), 38 to 58 (VVIT…FFVM), 88 to 108 (HMFM…SYLF), 126 to 146 (IAFY…SIYI), 176 to 196 (ITLL…YTFI), 226 to 246 (TFKL…VAMF), and 258 to 278 (IVSV…IIFV).

Belongs to the nematode receptor-like protein srd family.

The protein resides in the membrane. This Caenorhabditis elegans protein is Serpentine receptor class delta-25 (srd-25).